We begin with the raw amino-acid sequence, 257 residues long: NAD-capped RNA hydrolase NudC (257 aa).

R69 provides a ligand contact to substrate. Zn(2+) is bound by residues C98 and C101. E111 is a substrate binding site. Positions 116 and 119 each coordinate Zn(2+). Y124 contributes to the substrate binding site. The Nudix hydrolase domain occupies P125–T248. Residues A158, E174, and E178 each contribute to the a divalent metal cation site. The Nudix box signature appears at G159–G180. Q192–S199 serves as a coordination point for substrate. E219 serves as a coordination point for a divalent metal cation. A241 is a binding site for substrate.

Belongs to the Nudix hydrolase family. NudC subfamily. As to quaternary structure, homodimer. Mg(2+) serves as cofactor. The cofactor is Mn(2+). It depends on Zn(2+) as a cofactor.

The enzyme catalyses a 5'-end NAD(+)-phospho-ribonucleoside in mRNA + H2O = a 5'-end phospho-adenosine-phospho-ribonucleoside in mRNA + beta-nicotinamide D-ribonucleotide + 2 H(+). The catalysed reaction is NAD(+) + H2O = beta-nicotinamide D-ribonucleotide + AMP + 2 H(+). It carries out the reaction NADH + H2O = reduced beta-nicotinamide D-ribonucleotide + AMP + 2 H(+). Functionally, mRNA decapping enzyme that specifically removes the nicotinamide adenine dinucleotide (NAD) cap from a subset of mRNAs by hydrolyzing the diphosphate linkage to produce nicotinamide mononucleotide (NMN) and 5' monophosphate mRNA. The NAD-cap is present at the 5'-end of some mRNAs and stabilizes RNA against 5'-processing. Has preference for mRNAs with a 5'-end purine. Catalyzes the hydrolysis of a broad range of dinucleotide pyrophosphates. This Salmonella agona (strain SL483) protein is NAD-capped RNA hydrolase NudC.